We begin with the raw amino-acid sequence, 246 residues long: NAD(P)H-quinone oxidoreductase subunit K, organellar chromatophore (246 aa).

4 residues coordinate [4Fe-4S] cluster: C58, C59, C123, and C154.

The protein belongs to the complex I 20 kDa subunit family. In terms of assembly, NDH-1 is composed of 14 different subunits. Subunits nuoB, C, D, E, F, and G constitute the peripheral sector of the complex. [4Fe-4S] cluster serves as cofactor.

Its subcellular location is the plastid. The protein localises to the organellar chromatophore thylakoid membrane. It catalyses the reaction a quinone + NADH + H(+) = a quinol + NAD(+). NDH-1 shuttles electrons from NADH, via FMN and iron-sulfur (Fe-S) centers, to quinones in the respiratory chain. Couples the redox reaction to proton translocation (for every two electrons transferred, four hydrogen ions are translocated across the cytoplasmic membrane), and thus conserves the redox energy in a proton gradient. The sequence is that of NAD(P)H-quinone oxidoreductase subunit K, organellar chromatophore from Paulinella chromatophora.